The following is an 87-amino-acid chain: HssA/B-like protein 58 (87 aa).

Over residues 1-13 the composition is skewed to polar residues; it reads MTILSAITSISRP. Residues 1 to 31 form a disordered region; sequence MTILSAITSISRPNKSSKSVISSNGGSSLSM. Low complexity predominate over residues 14–31; it reads NKSSKSVISSNGGSSLSM.

The protein belongs to the hssA/B family.

The protein is HssA/B-like protein 58 (hssl58) of Dictyostelium discoideum (Social amoeba).